The chain runs to 455 residues: Immunoglobulin alpha-2 heavy chain (455 aa).

4 consecutive Ig-like domains span residues 1-95 (EVQL…VYYC), 121-213 (PKVF…QDVT), 227-322 (PRLS…ANIT), and 330-432 (PEVH…KTID). Positions 1–115 (EVQLVETGGG…GKGTTVTVSS (115 aa)) are variable (V) domain, involved in antigen recognition. Intrachain disulfides connect Cys-22/Cys-95 and Cys-141/Cys-200. The interval 116 to 455 (ASPTSPKVFP…VMAEADGTCY (340 aa)) is constant (C) domain. N-linked (GlcNAc...) asparagine glycosylation is found at Asn-162, Asn-207, and Asn-246. 2 disulfide bridges follow: Cys-225–Cys-282 and Cys-249–Cys-306. N-linked (GlcNAc...) asparagine glycosylation is present at Asn-320. A disulfide bond links Cys-352 and Cys-415. The N-linked (GlcNAc...) asparagine glycan is linked to Asn-442.

Immunoglobulins are composed of two identical heavy chains and two identical light chains; disulfide-linked. Monomeric or polymeric.

It is found in the secreted. Its subcellular location is the cell membrane. In terms of biological role, immunoglobulins, also known as antibodies, are membrane-bound or secreted glycoproteins produced by B lymphocytes. In the recognition phase of humoral immunity, the membrane-bound immunoglobulins serve as receptors which, upon binding of a specific antigen, trigger the clonal expansion and differentiation of B lymphocytes into immunoglobulins-secreting plasma cells. Secreted immunoglobulins mediate the effector phase of humoral immunity, which results in the elimination of bound antigens. The antigen binding site is formed by the variable domain of one heavy chain, together with that of its associated light chain. Thus, each immunoglobulin has two antigen binding sites with remarkable affinity for a particular antigen. The variable domains are assembled by a process called V-(D)-J rearrangement and can then be subjected to somatic hypermutations which, after exposure to antigen and selection, allow affinity maturation for a particular antigen. Ig alpha is the major immunoglobulin class in body secretions. The polypeptide is Immunoglobulin alpha-2 heavy chain (Homo sapiens (Human)).